A 374-amino-acid chain; its full sequence is Protein Brevis radix-like 2 (374 aa).

2 disordered regions span residues 12–43 (NTNNGGSKKQEEDEEEEDRVIETPRSKQIKSL) and 57–80 (AYKSCKPCSGSSNQNKNRSYADSD). The segment covering 65-80 (SGSSNQNKNRSYADSD) has biased composition (polar residues). The region spanning 143-198 (KEWVAQVEPGVLITFVSLPEGGNDMKRIRFSREMFDKWQAQKWWAENFDKVMELYN) is the BRX 1 domain. Positions 205 to 316 (QSVPLPTPPR…EELSVSNASD (112 aa)) are disordered. 2 stretches are compositionally biased toward polar residues: residues 246–259 (SSGSLAHQPTTQTQ) and 267–288 (GLATTPKLSSISGTKTETSSVD). Over residues 289–307 (ESARSSFSREEEEADHSGE) the composition is skewed to basic and acidic residues. The region spanning 319–374 (TEWVEQDEAGVYITIRALPDGTRELRRVRFSREKFGETNARLWWEQNRARIQQQYL) is the BRX 2 domain.

Belongs to the BRX family. Expressed in roots.

The protein localises to the nucleus. The sequence is that of Protein Brevis radix-like 2 (BRXL2) from Arabidopsis thaliana (Mouse-ear cress).